A 342-amino-acid polypeptide reads, in one-letter code: MENRMVTPFDVEDDREQYSLRPTTLKEYIGQKKVKANLDIFIKAAKKRSESLDHVLFYGPPGLGKTTLANIIANEMTGNLKVTSGPAIEKAGDLAAILTSLTDYDVLFIDEIHRLNRSIEEILYPAMEDYALDIVIGKGAAAKSIRLDLPKFTLIGATTRVGLLTSPLRDRFGMLCAMEFYTDEELMEIVVRSAAILNVNICREAAFEIGKRSRGTPRIANRLLKRVRDYCDVKHDGDIDLQGAKAALDLLEVDKEGLDKIDNKILEAIIFNFKGGPVGLETLAYFIGEELDTIEDVYEPYLIQKGFIMRTPRGRVASEKAYNHFGVTKKEEKDNQVSIFNK.

A large ATPase domain (RuvB-L) region spans residues 1-181 (MENRMVTPFD…FGMLCAMEFY (181 aa)). Residues leucine 20, arginine 21, glycine 62, lysine 65, threonine 66, threonine 67, 128–130 (EDY), arginine 171, tyrosine 181, and arginine 218 each bind ATP. Mg(2+) is bound at residue threonine 66. The small ATPAse domain (RuvB-S) stretch occupies residues 182 to 252 (TDEELMEIVV…GAKAALDLLE (71 aa)). The segment at 255–342 (KEGLDKIDNK…KDNQVSIFNK (88 aa)) is head domain (RuvB-H). Residues arginine 310 and arginine 315 each coordinate DNA.

It belongs to the RuvB family. In terms of assembly, homohexamer. Forms an RuvA(8)-RuvB(12)-Holliday junction (HJ) complex. HJ DNA is sandwiched between 2 RuvA tetramers; dsDNA enters through RuvA and exits via RuvB. An RuvB hexamer assembles on each DNA strand where it exits the tetramer. Each RuvB hexamer is contacted by two RuvA subunits (via domain III) on 2 adjacent RuvB subunits; this complex drives branch migration. In the full resolvosome a probable DNA-RuvA(4)-RuvB(12)-RuvC(2) complex forms which resolves the HJ.

It localises to the cytoplasm. It catalyses the reaction ATP + H2O = ADP + phosphate + H(+). The RuvA-RuvB-RuvC complex processes Holliday junction (HJ) DNA during genetic recombination and DNA repair, while the RuvA-RuvB complex plays an important role in the rescue of blocked DNA replication forks via replication fork reversal (RFR). RuvA specifically binds to HJ cruciform DNA, conferring on it an open structure. The RuvB hexamer acts as an ATP-dependent pump, pulling dsDNA into and through the RuvAB complex. RuvB forms 2 homohexamers on either side of HJ DNA bound by 1 or 2 RuvA tetramers; 4 subunits per hexamer contact DNA at a time. Coordinated motions by a converter formed by DNA-disengaged RuvB subunits stimulates ATP hydrolysis and nucleotide exchange. Immobilization of the converter enables RuvB to convert the ATP-contained energy into a lever motion, pulling 2 nucleotides of DNA out of the RuvA tetramer per ATP hydrolyzed, thus driving DNA branch migration. The RuvB motors rotate together with the DNA substrate, which together with the progressing nucleotide cycle form the mechanistic basis for DNA recombination by continuous HJ branch migration. Branch migration allows RuvC to scan DNA until it finds its consensus sequence, where it cleaves and resolves cruciform DNA. The sequence is that of Holliday junction branch migration complex subunit RuvB from Clostridium botulinum (strain 657 / Type Ba4).